The following is a 415-amino-acid chain: Mannosylglycerate hydrolase (415 aa).

Substrate-binding positions include tyrosine 23, 27–30, tyrosine 76, glutamine 98, and glycine 158; that span reads WLWD. Aspartate 160 (proton donor) is an active-site residue. Substrate is bound by residues arginine 193 and 344-345; that span reads YW. The active-site Proton acceptor is glutamate 388.

Belongs to the glycosyl hydrolase 63 family. As to quaternary structure, homotetramer in solution.

The enzyme catalyses (2R)-2-O-(alpha-D-mannosyl)-glycerate + H2O = D-mannose + (R)-glycerate. It carries out the reaction (2R)-2-O-(alpha-D-glucopyranosyl)-glycerate + H2O = (R)-glycerate + D-glucose. Activity is not stimulated by divalent cations and not affected in the presence of EDTA. Functionally, hydrolase that catalyzes the hydrolysis of mannosylglycerate (MG), a solute produced in response to osmotic stress in thermophiles, into mannose and glycerate. Can also hydrolyze glucosylglycerate (GG) to glucose and glycerate, with similar catalytic efficiency. Is highly specific for MG and GG, and cannot use mannosylglyceramide (MGA), glucosylglycerol, mannosylglucosylglycerate (MGG), glucosylglucosylglycerate (GGG) or trehalose as substrates. The protein is Mannosylglycerate hydrolase of Thermus thermophilus (strain ATCC BAA-163 / DSM 7039 / HB27).